The sequence spans 152 residues: Large-conductance mechanosensitive channel (152 aa).

The next 2 membrane-spanning stretches (helical) occupy residues valine 14–leucine 34 and glycine 81–isoleucine 101.

This sequence belongs to the MscL family. Homopentamer.

It is found in the cell membrane. Channel that opens in response to stretch forces in the membrane lipid bilayer. May participate in the regulation of osmotic pressure changes within the cell. The chain is Large-conductance mechanosensitive channel from Clostridium perfringens (strain ATCC 13124 / DSM 756 / JCM 1290 / NCIMB 6125 / NCTC 8237 / Type A).